Here is a 292-residue protein sequence, read N- to C-terminus: ATP synthase gamma chain (292 aa).

This sequence belongs to the ATPase gamma chain family. In terms of assembly, F-type ATPases have 2 components, CF(1) - the catalytic core - and CF(0) - the membrane proton channel. CF(1) has five subunits: alpha(3), beta(3), gamma(1), delta(1), epsilon(1). CF(0) has three main subunits: a, b and c.

Its subcellular location is the cell inner membrane. Its function is as follows. Produces ATP from ADP in the presence of a proton gradient across the membrane. The gamma chain is believed to be important in regulating ATPase activity and the flow of protons through the CF(0) complex. This chain is ATP synthase gamma chain, found in Methylobacterium sp. (strain 4-46).